Reading from the N-terminus, the 249-residue chain is UPF0696 protein C11orf68 homolog (249 aa).

Belongs to the UPF0696 family.

The chain is UPF0696 protein C11orf68 homolog from Danio rerio (Zebrafish).